The sequence spans 111 residues: Nascent polypeptide-associated complex protein (111 aa).

Residues 3–72 (GMNPRQMKKL…EEVREVLEIS (70 aa)) enclose the NAC-A/B domain.

It belongs to the NAC-alpha family. In terms of assembly, homodimer. Interacts with the ribosome. Binds ribosomal RNA.

Its function is as follows. Contacts the emerging nascent chain on the ribosome. The sequence is that of Nascent polypeptide-associated complex protein from Thermococcus kodakarensis (strain ATCC BAA-918 / JCM 12380 / KOD1) (Pyrococcus kodakaraensis (strain KOD1)).